Here is a 671-residue protein sequence, read N- to C-terminus: K(+)-insensitive pyrophosphate-energized proton pump (671 aa).

5 helical membrane passes run 3-23 (SLIF…AFFA), 57-77 (TIAV…DDGL), 79-99 (IAIG…IGMS), 128-148 (AVTG…FYIL), and 156-176 (VGFG…GGIF). Lysine 178 provides a ligand contact to substrate. Residues aspartate 181, aspartate 185, asparagine 208, and aspartate 211 each coordinate Mg(2+). 6 consecutive transmembrane segments (helical) span residues 223 to 243 (LFET…LIIG), 249 to 269 (ILYP…SVFF), 285 to 305 (GVGG…NSLM), 310 to 330 (LFYA…ITEY), 366 to 386 (LVPT…VGGA), and 391 to 411 (IGLY…GMIV). A Mg(2+)-binding site is contributed by aspartate 421. 4 helical membrane passes run 452 to 472 (AVTK…LFAD), 490 to 510 (VVLA…AVTM), 558 to 578 (MAMP…ILGP), and 580 to 600 (ALAG…LMMD). The Ca(2+) site is built by aspartate 607, aspartate 633, and aspartate 637. Lysine 640 is a substrate binding site. Residues 646–666 (ALNALIKVVNMVAILFSSLII) form a helical membrane-spanning segment.

The protein belongs to the H(+)-translocating pyrophosphatase (TC 3.A.10) family. K(+)-insensitive subfamily. As to quaternary structure, homodimer. The cofactor is Mg(2+).

The protein localises to the cell membrane. It catalyses the reaction diphosphate + H2O + H(+)(in) = 2 phosphate + 2 H(+)(out). Its function is as follows. Proton pump that utilizes the energy of pyrophosphate hydrolysis as the driving force for proton movement across the membrane. Generates a proton motive force. The polypeptide is K(+)-insensitive pyrophosphate-energized proton pump (Methanosarcina acetivorans (strain ATCC 35395 / DSM 2834 / JCM 12185 / C2A)).